A 652-amino-acid chain; its full sequence is DNA ligase (652 aa).

Residues 29–33 (DSEYD), 78–79 (SL), and glutamate 107 contribute to the NAD(+) site. The active-site N6-AMP-lysine intermediate is the lysine 109. Residues arginine 130, glutamate 164, lysine 278, and lysine 302 each contribute to the NAD(+) site. Zn(2+)-binding residues include cysteine 395, cysteine 398, cysteine 413, and cysteine 418. Positions 577–652 (VADAALSGLT…VRDEAWLESL (76 aa)) constitute a BRCT domain.

It belongs to the NAD-dependent DNA ligase family. LigA subfamily. It depends on Mg(2+) as a cofactor. Mn(2+) is required as a cofactor.

It carries out the reaction NAD(+) + (deoxyribonucleotide)n-3'-hydroxyl + 5'-phospho-(deoxyribonucleotide)m = (deoxyribonucleotide)n+m + AMP + beta-nicotinamide D-nucleotide.. Functionally, DNA ligase that catalyzes the formation of phosphodiester linkages between 5'-phosphoryl and 3'-hydroxyl groups in double-stranded DNA using NAD as a coenzyme and as the energy source for the reaction. It is essential for DNA replication and repair of damaged DNA. In Streptococcus pneumoniae (strain JJA), this protein is DNA ligase.